The primary structure comprises 271 residues: MTAWILLPVSLSAFSITGIWTVYAMAVMNHHVCPVENWSYNESCPPDPAEQGGPKTCCTLDDVPLISKCGSYPPESCLFSLIGNMGAFMVALICLLRYGQLLEQSRHSWVNTTALITGCTNAAGLLVVGNFQVDHARSLHYVGAGVAFPAGLLFVCLHCALSYQGATAPLDLAVAYLRSVLAVIAFITLVLSGVFFVHESSQLQHGAALCEWVCVIDILIFYGTFSYEFGAVSSDTLVAALQPTPGRACKSSGSSSTSTHLNCAPESIAMI.

At Met1 to Thr2 the chain is on the cytoplasmic side. Residues Ala3–Tyr23 form a helical membrane-spanning segment. At Ala24 to Glu75 the chain is on the extracellular side. Asn37 and Asn41 each carry an N-linked (GlcNAc...) asparagine glycan. A helical transmembrane segment spans residues Ser76 to Leu96. Topologically, residues Arg97–Ser108 are cytoplasmic. The chain crosses the membrane as a helical span at residues Trp109 to Gly129. The Extracellular segment spans residues Asn130–His140. A helical transmembrane segment spans residues Tyr141–Leu161. Residues Ser162–Arg178 are Cytoplasmic-facing. A helical membrane pass occupies residues Ser179–Glu199. At Ser200 to Glu211 the chain is on the extracellular side. A helical transmembrane segment spans residues Trp212–Val232. The Cytoplasmic segment spans residues Ser233–Ile271.

This sequence belongs to the DRAM/TMEM150 family. In terms of assembly, interacts (via C-terminal cytoplasmic tail) with PI4KA.

Its subcellular location is the cell membrane. Regulates localization of phosphatidylinositol 4-kinase (PI4K) to the plasma membrane, possibly by reducing the association of TTC7 (TTC7A or TTC7B) with the PI4K complex. Acts as a regulator of phosphatidylinositol 4-phosphate (PtdIns(4)P) synthesis. May also play a role in fasting-induced catabolism. This Homo sapiens (Human) protein is Transmembrane protein 150A (TMEM150A).